Reading from the N-terminus, the 907-residue chain is Protein translocase subunit SecA (907 aa).

ATP is bound by residues glutamine 87, 105–109 (GEGKT), and aspartate 512. Cysteine 891, cysteine 893, cysteine 902, and histidine 903 together coordinate Zn(2+).

This sequence belongs to the SecA family. As to quaternary structure, monomer and homodimer. Part of the essential Sec protein translocation apparatus which comprises SecA, SecYEG and auxiliary proteins SecDF-YajC and YidC. It depends on Zn(2+) as a cofactor.

It localises to the cell inner membrane. The protein localises to the cytoplasm. The catalysed reaction is ATP + H2O + cellular proteinSide 1 = ADP + phosphate + cellular proteinSide 2.. In terms of biological role, part of the Sec protein translocase complex. Interacts with the SecYEG preprotein conducting channel. Has a central role in coupling the hydrolysis of ATP to the transfer of proteins into and across the cell membrane, serving both as a receptor for the preprotein-SecB complex and as an ATP-driven molecular motor driving the stepwise translocation of polypeptide chains across the membrane. This is Protein translocase subunit SecA from Shewanella loihica (strain ATCC BAA-1088 / PV-4).